A 275-amino-acid polypeptide reads, in one-letter code: MPVRKYKPTSAGRRNMSVSTFEEITKKEPERSLLEPLRKKAGRNVYGRITVRHRGGGHKRHYRKIDFKRDKVGIPAKVAAIEYDPNRSARIALLHYVDGEKRYILAPLGLNVGDTVMSGPAADIRVGNALPLRQIPLGTQVHNIELEKGRGGVMVRSAGAAAQLMAKEGNYATLRMPSGEVRRVFIECMATIGQVGNLDHQNVRLGKAGRKRWLGRRPEVRGAAMNPRDHPHGGGEGRAPRGMPTPKTKWGKPARGVKTRHNPRTDAFIIRRRTR.

Residues 219–263 (EVRGAAMNPRDHPHGGGEGRAPRGMPTPKTKWGKPARGVKTRHNP) form a disordered region. Residues 227–239 (PRDHPHGGGEGRA) are compositionally biased toward basic and acidic residues. The span at 249-262 (KWGKPARGVKTRHN) shows a compositional bias: basic residues.

This sequence belongs to the universal ribosomal protein uL2 family. In terms of assembly, part of the 50S ribosomal subunit. Forms a bridge to the 30S subunit in the 70S ribosome.

In terms of biological role, one of the primary rRNA binding proteins. Required for association of the 30S and 50S subunits to form the 70S ribosome, for tRNA binding and peptide bond formation. It has been suggested to have peptidyltransferase activity; this is somewhat controversial. Makes several contacts with the 16S rRNA in the 70S ribosome. The protein is Large ribosomal subunit protein uL2 of Roseiflexus castenholzii (strain DSM 13941 / HLO8).